We begin with the raw amino-acid sequence, 266 residues long: Electron transfer flavoprotein subunit beta (266 aa).

It belongs to the ETF beta-subunit/FixA family. As to quaternary structure, heterodimer of an alpha and a beta subunit. FAD serves as cofactor. AMP is required as a cofactor.

In terms of biological role, the electron transfer flavoprotein serves as a specific electron acceptor for other dehydrogenases. It transfers the electrons to the main respiratory chain via ETF-ubiquinone oxidoreductase (ETF dehydrogenase). The chain is Electron transfer flavoprotein subunit beta (etfB) from Mycobacterium leprae (strain TN).